The following is a 495-amino-acid chain: Probable leucine aminopeptidase 2 (495 aa).

The N-terminal stretch at 1–21 (MKSQLLSLAVAVTTISQGVVG) is a signal peptide. One can recognise a PA domain in the interval 130 to 216 (MAELVVAKNN…SQEDGKNLAT (87 aa)). N-linked (GlcNAc...) asparagine glycans are attached at residues N142 and N235. Residues H259 and D271 each coordinate Zn(2+). N-linked (GlcNAc...) asparagine glycosylation occurs at N272. E303 functions as the Proton acceptor in the catalytic mechanism. Residues E304 and D332 each contribute to the Zn(2+) site. N352 is a glycosylation site (N-linked (GlcNAc...) asparagine). H430 contributes to the Zn(2+) binding site.

It belongs to the peptidase M28 family. M28A subfamily. Monomer. Requires Zn(2+) as cofactor.

The protein localises to the secreted. Extracellular aminopeptidase that releases a wide variety of amino acids from natural peptides and contributes to pathogenicity. In Arthroderma benhamiae (strain ATCC MYA-4681 / CBS 112371) (Trichophyton mentagrophytes), this protein is Probable leucine aminopeptidase 2 (LAP2).